Reading from the N-terminus, the 188-residue chain is Ribosome maturation factor RimM (188 aa).

Residues 112–187 (SDSYYWVDLI…LLTLDWQSDW (76 aa)) enclose the PRC barrel domain.

The protein belongs to the RimM family. Binds ribosomal protein uS19.

The protein resides in the cytoplasm. An accessory protein needed during the final step in the assembly of 30S ribosomal subunit, possibly for assembly of the head region. Essential for efficient processing of 16S rRNA. May be needed both before and after RbfA during the maturation of 16S rRNA. It has affinity for free ribosomal 30S subunits but not for 70S ribosomes. This chain is Ribosome maturation factor RimM, found in Polynucleobacter asymbioticus (strain DSM 18221 / CIP 109841 / QLW-P1DMWA-1) (Polynucleobacter necessarius subsp. asymbioticus).